Here is a 437-residue protein sequence, read N- to C-terminus: Sodium/bile acid cotransporter 4 (437 aa).

The Extracellular portion of the chain corresponds to 1–103 (MDSLDNTTLL…PPFWDTPLNH (103 aa)). N-linked (GlcNAc...) asparagine glycans are attached at residues asparagine 6 and asparagine 20. The tract at residues 15-79 (SLLPDNLTLS…SSSLTVGVAG (65 aa)) is disordered. Polar residues predominate over residues 22 to 41 (TLSPNAGSPSASTLSPLAVT). The span at 42–74 (SSPGPGLSLAPSPSIGFSPEATPTPEPTSSSLT) shows a compositional bias: low complexity. The helical transmembrane segment at 104 to 124 (GLNVFVGAALCITMLGLGCTV) threads the bilayer. The Cytoplasmic segment spans residues 125 to 140 (DVNHFGAHVRRPVGAL). The helical transmembrane segment at 141 to 161 (LAALCQFGFLPLLAFLLALIF) threads the bilayer. Over 162–197 (KLDEVAAVAVLLCGCCPGGNLSNLMSLLVDGDMNLS) the chain is Extracellular. Asparagine 181 and asparagine 195 each carry an N-linked (GlcNAc...) asparagine glycan. Residues 198–218 (IIMTISSTLLALVLMPLCLWI) form a helical membrane-spanning segment. Residues 219-233 (YSRAWINTPLVQLLP) lie on the Cytoplasmic side of the membrane. A helical membrane pass occupies residues 234 to 254 (LGAVTLTLCSTLIPIGLGVFI). The Extracellular segment spans residues 255–267 (RYKYNRVADYIVK). The helical transmembrane segment at 268–288 (VSLWSLLVTLVVLFIMTGTML) threads the bilayer. Residues 289–291 (GPE) lie on the Cytoplasmic side of the membrane. A helical membrane pass occupies residues 292 to 312 (LLASIPATVYVVAIFMPLAGY). The Extracellular portion of the chain corresponds to 313-360 (ASGYGLATLFHLPPNCKRTVCLETGSQNVQLCTAILKLAFPPRFIGSM). Residues 361–381 (YMFPLLYALFQSAEAGVFVLI) traverse the membrane as a helical segment. The Cytoplasmic portion of the chain corresponds to 382–437 (YKMYGSEILHKREALDEDEDTDISYKKLKEEEMADTSYGTVGTDDLVMMETTQTAL).

The protein belongs to the bile acid:sodium symporter (BASS) (TC 2.A.28) family. In terms of processing, activated following N-terminal proteolytic cleavage by thrombin and/or proteases. Highest expression in the brain and significantly above background levels in the eye, prostate, and whole embryo tissue preparations.

It is found in the cell membrane. Its function is as follows. Transporter for bile acids. In Mus musculus (Mouse), this protein is Sodium/bile acid cotransporter 4 (Slc10a4).